The following is a 337-amino-acid chain: Acetyl-coenzyme A synthetase (337 aa).

CoA-binding positions include 131–134 (RGGR), Thr-249, and Asn-273. 325 to 327 (GEP) lines the ATP pocket.

Belongs to the ATP-dependent AMP-binding enzyme family. Mg(2+) serves as cofactor. Post-translationally, acetylated. Deacetylation by the SIR2-homolog deacetylase activates the enzyme.

It carries out the reaction acetate + ATP + CoA = acetyl-CoA + AMP + diphosphate. Functionally, catalyzes the conversion of acetate into acetyl-CoA (AcCoA), an essential intermediate at the junction of anabolic and catabolic pathways. AcsA undergoes a two-step reaction. In the first half reaction, AcsA combines acetate with ATP to form acetyl-adenylate (AcAMP) intermediate. In the second half reaction, it can then transfer the acetyl group from AcAMP to the sulfhydryl group of CoA, forming the product AcCoA. This chain is Acetyl-coenzyme A synthetase (acsA), found in Nostoc linckia.